Consider the following 143-residue polypeptide: Deoxyuridine 5'-triphosphate nucleotidohydrolase (143 aa).

Substrate contacts are provided by residues 63–65, N76, 80–82, and K90; these read RSG and TID.

This sequence belongs to the dUTPase family. The cofactor is Mg(2+).

The enzyme catalyses dUTP + H2O = dUMP + diphosphate + H(+). Its pathway is pyrimidine metabolism; dUMP biosynthesis; dUMP from dCTP (dUTP route): step 2/2. In terms of biological role, this enzyme is involved in nucleotide metabolism: it produces dUMP, the immediate precursor of thymidine nucleotides and it decreases the intracellular concentration of dUTP so that uracil cannot be incorporated into DNA. In Finegoldia magna (strain ATCC 29328 / DSM 20472 / WAL 2508) (Peptostreptococcus magnus), this protein is Deoxyuridine 5'-triphosphate nucleotidohydrolase.